The sequence spans 390 residues: Elongation factor Tu 2 (390 aa).

One can recognise a tr-type G domain in the interval 10–203 (KPHLNIGTMG…AVDTYVPMPE (194 aa)). The tract at residues 19-26 (GHVDHGKT) is G1. 19–26 (GHVDHGKT) is a binding site for GTP. Thr26 contacts Mg(2+). The G2 stretch occupies residues 60-64 (GITIN). The segment at 81–84 (DMPG) is G3. GTP-binding positions include 81-85 (DMPGH) and 136-139 (NKAD). The G4 stretch occupies residues 136–139 (NKAD). Residues 173–175 (SGL) form a G5 region.

It belongs to the TRAFAC class translation factor GTPase superfamily. Classic translation factor GTPase family. EF-Tu/EF-1A subfamily. Monomer.

The protein resides in the cytoplasm. It carries out the reaction GTP + H2O = GDP + phosphate + H(+). GTP hydrolase that promotes the GTP-dependent binding of aminoacyl-tRNA to the A-site of ribosomes during protein biosynthesis. In Streptomyces avermitilis (strain ATCC 31267 / DSM 46492 / JCM 5070 / NBRC 14893 / NCIMB 12804 / NRRL 8165 / MA-4680), this protein is Elongation factor Tu 2.